Consider the following 477-residue polypeptide: Aspartyl/glutamyl-tRNA(Asn/Gln) amidotransferase subunit B (477 aa).

The protein belongs to the GatB/GatE family. GatB subfamily. Heterotrimer of A, B and C subunits.

It carries out the reaction L-glutamyl-tRNA(Gln) + L-glutamine + ATP + H2O = L-glutaminyl-tRNA(Gln) + L-glutamate + ADP + phosphate + H(+). The catalysed reaction is L-aspartyl-tRNA(Asn) + L-glutamine + ATP + H2O = L-asparaginyl-tRNA(Asn) + L-glutamate + ADP + phosphate + 2 H(+). Its function is as follows. Allows the formation of correctly charged Asn-tRNA(Asn) or Gln-tRNA(Gln) through the transamidation of misacylated Asp-tRNA(Asn) or Glu-tRNA(Gln) in organisms which lack either or both of asparaginyl-tRNA or glutaminyl-tRNA synthetases. The reaction takes place in the presence of glutamine and ATP through an activated phospho-Asp-tRNA(Asn) or phospho-Glu-tRNA(Gln). The polypeptide is Aspartyl/glutamyl-tRNA(Asn/Gln) amidotransferase subunit B (Ureaplasma urealyticum serovar 10 (strain ATCC 33699 / Western)).